The primary structure comprises 252 residues: Chitooligosaccharide deacetylase (252 aa).

Residues His-61 and His-125 each coordinate Mg(2+).

Belongs to the YdjC deacetylase family. ChbG subfamily. As to quaternary structure, homodimer. It depends on Mg(2+) as a cofactor.

The protein resides in the cytoplasm. The catalysed reaction is N,N'-diacetylchitobiose + H2O = N-acetyl-beta-D-glucosaminyl-(1-&gt;4)-D-glucosamine + acetate. It carries out the reaction diacetylchitobiose-6'-phosphate + H2O = N'-monoacetylchitobiose-6'-phosphate + acetate. It participates in glycan degradation; chitin degradation. Its function is as follows. Involved in the degradation of chitin. ChbG is essential for growth on the acetylated chitooligosaccharides chitobiose and chitotriose but is dispensable for growth on cellobiose and chitosan dimer, the deacetylated form of chitobiose. Deacetylation of chitobiose-6-P and chitotriose-6-P is necessary for both the activation of the chb promoter by the regulatory protein ChbR and the hydrolysis of phosphorylated beta-glucosides by the phospho-beta-glucosidase ChbF. Catalyzes the removal of only one acetyl group from chitobiose-6-P to yield monoacetylchitobiose-6-P, the inducer of ChbR and the substrate of ChbF. The protein is Chitooligosaccharide deacetylase of Salmonella paratyphi C (strain RKS4594).